The sequence spans 35 residues: Photosystem II reaction center protein T (35 aa).

Residues 3-23 (ALVYTFLLVSTLGIIFFAIFF) form a helical membrane-spanning segment.

It belongs to the PsbT family. PSII is composed of 1 copy each of membrane proteins PsbA, PsbB, PsbC, PsbD, PsbE, PsbF, PsbH, PsbI, PsbJ, PsbK, PsbL, PsbM, PsbT, PsbY, PsbZ, Psb30/Ycf12, at least 3 peripheral proteins of the oxygen-evolving complex and a large number of cofactors. It forms dimeric complexes.

The protein resides in the plastid. It localises to the chloroplast thylakoid membrane. Functionally, found at the monomer-monomer interface of the photosystem II (PS II) dimer, plays a role in assembly and dimerization of PSII. PSII is a light-driven water plastoquinone oxidoreductase, using light energy to abstract electrons from H(2)O, generating a proton gradient subsequently used for ATP formation. This Asarum canadense (Wild ginger) protein is Photosystem II reaction center protein T.